The chain runs to 78 residues: Translation initiation factor IF-1 (78 aa).

One can recognise an S1-like domain in the interval 2 to 78 (SKNNLNETES…TQARITYRFK (77 aa)).

This sequence belongs to the IF-1 family. Component of the 30S ribosomal translation pre-initiation complex which assembles on the 30S ribosome in the order IF-2 and IF-3, IF-1 and N-formylmethionyl-tRNA(fMet); mRNA recruitment can occur at any time during PIC assembly.

It is found in the cytoplasm. One of the essential components for the initiation of protein synthesis. Stabilizes the binding of IF-2 and IF-3 on the 30S subunit to which N-formylmethionyl-tRNA(fMet) subsequently binds. Helps modulate mRNA selection, yielding the 30S pre-initiation complex (PIC). Upon addition of the 50S ribosomal subunit IF-1, IF-2 and IF-3 are released leaving the mature 70S translation initiation complex. The chain is Translation initiation factor IF-1 from Aster yellows witches'-broom phytoplasma (strain AYWB).